Here is a 420-residue protein sequence, read N- to C-terminus: uncharacterized protein (420 aa).

It belongs to the Rv1128c/1148c/1588c/1702c/1945/3466 family.

This is an uncharacterized protein from Mycobacterium tuberculosis (strain CDC 1551 / Oshkosh).